The primary structure comprises 345 residues: Protein RecA (345 aa).

65–72 (GPESSGKT) is an ATP binding site.

Belongs to the RecA family.

Its subcellular location is the cytoplasm. In terms of biological role, can catalyze the hydrolysis of ATP in the presence of single-stranded DNA, the ATP-dependent uptake of single-stranded DNA by duplex DNA, and the ATP-dependent hybridization of homologous single-stranded DNAs. It interacts with LexA causing its activation and leading to its autocatalytic cleavage. The polypeptide is Protein RecA (Stenotrophomonas maltophilia (strain R551-3)).